We begin with the raw amino-acid sequence, 126 residues long: S-adenosylmethionine decarboxylase proenzyme (126 aa).

The active-site Schiff-base intermediate with substrate; via pyruvic acid is S63. The residue at position 63 (S63) is a Pyruvic acid (Ser); by autocatalysis. The Proton acceptor; for processing activity role is filled by H68. C83 serves as the catalytic Proton donor; for catalytic activity.

Belongs to the prokaryotic AdoMetDC family. Type 1 subfamily. As to quaternary structure, heterotetramer of two alpha and two beta chains arranged as a dimer of alpha/beta heterodimers. Requires pyruvate as cofactor. Is synthesized initially as an inactive proenzyme. Formation of the active enzyme involves a self-maturation process in which the active site pyruvoyl group is generated from an internal serine residue via an autocatalytic post-translational modification. Two non-identical subunits are generated from the proenzyme in this reaction, and the pyruvate is formed at the N-terminus of the alpha chain, which is derived from the carboxyl end of the proenzyme. The post-translation cleavage follows an unusual pathway, termed non-hydrolytic serinolysis, in which the side chain hydroxyl group of the serine supplies its oxygen atom to form the C-terminus of the beta chain, while the remainder of the serine residue undergoes an oxidative deamination to produce ammonia and the pyruvoyl group blocking the N-terminus of the alpha chain.

The catalysed reaction is S-adenosyl-L-methionine + H(+) = S-adenosyl 3-(methylsulfanyl)propylamine + CO2. Its pathway is amine and polyamine biosynthesis; S-adenosylmethioninamine biosynthesis; S-adenosylmethioninamine from S-adenosyl-L-methionine: step 1/1. Catalyzes the decarboxylation of S-adenosylmethionine to S-adenosylmethioninamine (dcAdoMet), the propylamine donor required for the synthesis of the polyamines spermine and spermidine from the diamine putrescine. In Clostridium tetani (strain Massachusetts / E88), this protein is S-adenosylmethionine decarboxylase proenzyme.